We begin with the raw amino-acid sequence, 370 residues long: MLYLLYEWLARSQEHLPALNLLKYLTFRSGMAMLTAYIVAVAMGSRFIRWMKAKQGKGQPIRTDGIARHVTEKAGTPTMGGFMILAGLFVAALLWADLRNVHVWVVLLITGSYGLLGFMDDYAKVTKQTTAGLSSVQKLVAQFIVAIIATVILILFAPKSPMTPGMETSLVFPIFKALVINLGWFYVAFAAFTIAGFSNAVNLTDGLDGLAIVPVMFAASTFGLIAYLVGNYKFADYLNLHFAPGVGELAVLCGAIIGGGMGFLWYNAPPAKIFMGDTGSLALGGALGAIAVCAKHELVLGIVGGLFVAEALSVMIQVAYFKKTGKRVFLMAPIHHHFEKLGWPESTVVIRFWIVSMILAFIGLATLKLR.

Transmembrane regions (helical) follow at residues 24–44 (YLTFRSGMAMLTAYIVAVAMG), 78–98 (TMGGFMILAGLFVAALLWADL), 103–123 (VWVVLLITGSYGLLGFMDDYA), 138–158 (KLVAQFIVAIIATVILILFAP), 177–197 (ALVINLGWFYVAFAAFTIAGF), 209–229 (GLAIVPVMFAASTFGLIAYLV), 245–265 (GVGELAVLCGAIIGGGMGFLW), 273–293 (IFMGDTGSLALGGALGAIAVC), 298–318 (LVLGIVGGLFVAEALSVMIQV), and 347–367 (TVVIRFWIVSMILAFIGLATL).

Belongs to the glycosyltransferase 4 family. MraY subfamily. Mg(2+) is required as a cofactor.

The protein resides in the cell inner membrane. It carries out the reaction UDP-N-acetyl-alpha-D-muramoyl-L-alanyl-gamma-D-glutamyl-meso-2,6-diaminopimeloyl-D-alanyl-D-alanine + di-trans,octa-cis-undecaprenyl phosphate = di-trans,octa-cis-undecaprenyl diphospho-N-acetyl-alpha-D-muramoyl-L-alanyl-D-glutamyl-meso-2,6-diaminopimeloyl-D-alanyl-D-alanine + UMP. It participates in cell wall biogenesis; peptidoglycan biosynthesis. Functionally, catalyzes the initial step of the lipid cycle reactions in the biosynthesis of the cell wall peptidoglycan: transfers peptidoglycan precursor phospho-MurNAc-pentapeptide from UDP-MurNAc-pentapeptide onto the lipid carrier undecaprenyl phosphate, yielding undecaprenyl-pyrophosphoryl-MurNAc-pentapeptide, known as lipid I. The chain is Phospho-N-acetylmuramoyl-pentapeptide-transferase from Caulobacter vibrioides (strain NA1000 / CB15N) (Caulobacter crescentus).